Reading from the N-terminus, the 1043-residue chain is Chitin synthase 2 (1043 aa).

The segment covering 1 to 10 has biased composition (polar residues); the sequence is MAQESSNMDQ. 2 disordered regions span residues 1–133 and 215–234; these read MAQE…PRRP and ESDF…ERRG. The segment covering 11–21 has biased composition (basic and acidic residues); it reads SKSDNVTDNKP. Residues 43 to 58 show a composition bias toward low complexity; sequence SASTSSLPTSRPSSSP. Polar residues-rich tracts occupy residues 59 to 73 and 81 to 93; these read GQSP…TSDT and VSPT…SRGS. 6 helical membrane-spanning segments follow: residues 663–683, 703–723, 738–758, 780–800, 907–927, and 931–951; these read FVSL…FYFI, IFAI…VLSM, MIIY…MVVM, YIIV…FLYL, YMVS…SEAF, and SVGN…LAVF.

The protein belongs to the chitin synthase family. Class II subfamily.

The protein localises to the cell membrane. It carries out the reaction [(1-&gt;4)-N-acetyl-beta-D-glucosaminyl](n) + UDP-N-acetyl-alpha-D-glucosamine = [(1-&gt;4)-N-acetyl-beta-D-glucosaminyl](n+1) + UDP + H(+). Its function is as follows. Polymerizes chitin, a structural polymer of the cell wall and septum, by transferring the sugar moiety of UDP-GlcNAc to the non-reducing end of the growing chitin polymer. This is Chitin synthase 2 (CHS2) from Paracoccidioides brasiliensis.